A 306-amino-acid chain; its full sequence is Agmatinase (306 aa).

His126, Asp149, His151, Asp153, Asp230, and Asp232 together coordinate Mn(2+).

This sequence belongs to the arginase family. Agmatinase subfamily. The cofactor is Mn(2+).

The catalysed reaction is agmatine + H2O = urea + putrescine. Its pathway is amine and polyamine biosynthesis; putrescine biosynthesis via agmatine pathway; putrescine from agmatine: step 1/1. Its function is as follows. Catalyzes the formation of putrescine from agmatine. In Escherichia coli O7:K1 (strain IAI39 / ExPEC), this protein is Agmatinase.